Reading from the N-terminus, the 110-residue chain is RNA polymerase II transcriptional coactivator (110 aa).

The interval 1–50 (MPKTKKKDSSSDSDSGPDDRIKPASKKAKESDAPNSDPKDSGENGATSWT) is disordered. Over residues 17–42 (PDDRIKPASKKAKESDAPNSDPKDSG) the composition is skewed to basic and acidic residues.

It belongs to the transcriptional coactivator PC4 family.

Its subcellular location is the nucleus. General coactivator that functions cooperatively with TAFs and mediates functional interactions between upstream activators and the general transcriptional machinery. Binds single-stranded DNA. Binds specifically to the NssBF element, a short nucleotide sequence of the 1731 retrotransposon, to repress promoter activity. This chain is RNA polymerase II transcriptional coactivator (Ssb-c31a), found in Drosophila melanogaster (Fruit fly).